The following is a 249-amino-acid chain: 3-deoxy-D-manno-octulosonic acid kinase (249 aa).

Residue Asp175 is part of the active site.

This sequence belongs to the protein kinase superfamily. KdkA/RfaP family.

The protein resides in the cell inner membrane. The catalysed reaction is an alpha-Kdo-(2-&gt;6)-lipid IVA + ATP = a 4-O-phospho-alpha-Kdo-(2-&gt;6)-lipid IVA + ADP + H(+). The protein operates within bacterial outer membrane biogenesis; LPS core biosynthesis. In terms of biological role, catalyzes the ATP-dependent phosphorylation of the 3-deoxy-D-manno-octulosonic acid (Kdo) residue in Kdo-lipid IV(A) at the 4-OH position. The sequence is that of 3-deoxy-D-manno-octulosonic acid kinase from Stenotrophomonas maltophilia (strain K279a).